The chain runs to 313 residues: Solute carrier family 35 member E3 (313 aa).

The next 10 membrane-spanning stretches (helical) occupy residues I14–W34, G40–I60, I77–S97, I100–Y122, I130–Y146, L153–V173, L187–E207, I215–F235, T252–F272, and P275–T295.

It belongs to the TPT transporter family. SLC35E subfamily.

It is found in the membrane. Putative transporter. This chain is Solute carrier family 35 member E3 (slc35e3), found in Danio rerio (Zebrafish).